Reading from the N-terminus, the 407-residue chain is S-adenosylmethionine synthase (407 aa).

An ATP-binding site is contributed by Gly-140 to Asp-145.

The protein belongs to the AdoMet synthase 2 family. Mg(2+) is required as a cofactor.

The catalysed reaction is L-methionine + ATP + H2O = S-adenosyl-L-methionine + phosphate + diphosphate. Its pathway is amino-acid biosynthesis; S-adenosyl-L-methionine biosynthesis; S-adenosyl-L-methionine from L-methionine: step 1/1. Functionally, catalyzes the formation of S-adenosylmethionine from methionine and ATP. The chain is S-adenosylmethionine synthase from Methanosphaera stadtmanae (strain ATCC 43021 / DSM 3091 / JCM 11832 / MCB-3).